The sequence spans 2543 residues: Highly reducing polyketide synthase GPY1 (2543 aa).

Residues 9-435 form the Ketosynthase family 3 (KS3) domain; that stretch reads REPIAIVSMA…GSTAHAVVEF (427 aa). Active-site for beta-ketoacyl synthase activity residues include cysteine 182, histidine 318, and histidine 358. A malonyl-CoA:ACP transacylase (MAT) domain region spans residues 574-881; that stretch reads TFTGQGAMWS…PFFATMLRNA (308 aa). Residues 953–1089 are N-terminal hotdog fold; it reads HEILGSRCRG…GRAAVLETSK (137 aa). Residues 953-1253 are dehydratase (DH) domain; it reads HEILGSRCRG…GLQMDRATSD (301 aa). A PKS/mFAS DH domain is found at 953 to 1256; the sequence is HEILGSRCRG…MDRATSDDNT (304 aa). The active-site Proton acceptor; for dehydratase activity is the histidine 985. A C-terminal hotdog fold region spans residues 1103–1256; it reads MPLKVPLKSY…MDRATSDDNT (154 aa). Residue aspartate 1169 is the Proton donor; for dehydratase activity of the active site. Residues 1399 to 1587 form a methyltransferase (CMet) domain region; that stretch reads NDLLYRFYEE…LDEWRNELAA (189 aa). The segment at 1830–2136 is enoyl reductase (ER) domain; it reads GILESLTMAQ…IEGTSNKQVV (307 aa). The tract at residues 2161–2335 is ketoreductase (KR) domain; it reads TYIITGGLGG…ASSVDLGFVE (175 aa). The Carrier domain maps to 2464 to 2541; sequence ALQPFVCTAL…DLSARVSRMI (78 aa). Serine 2501 carries the post-translational modification O-(pantetheine 4'-phosphoryl)serine.

Functionally, highly reducing polyketide synthase; part of the gene cluster that mediates the biosynthesis of gibepyrone A, a 2H-pyran-2-one metabolite exhibiting a moderate antimicrobial activity against Gram-positive bacteria and yeasts. The highly reducing polyketide synthase GPY1 is sufficient to produce gibepyrone A. GPY1 uses an acetyl-CoA starter unit, three malonyl-CoA extender units, and two SAM-dependent methylations to establish the gibepyrone A carbon backbone, followed by product release upon intramolecular cyclization. The gibepyrone A derivatives gibepyrones B and D are produced by cluster-independent P450 monooxygenases, probably to protect the fungus from the toxic product. In contrast, the formation of gibepyrones E and F from gibepyrone A is a spontaneous process and independent of enzymatic activity. This chain is Highly reducing polyketide synthase GPY1, found in Gibberella fujikuroi (strain CBS 195.34 / IMI 58289 / NRRL A-6831) (Bakanae and foot rot disease fungus).